Here is a 125-residue protein sequence, read N- to C-terminus: Mating factor alpha (125 aa).

The first 22 residues, 1–22 (MKLFTTLSASLIFIHSLGSTRA), serve as a signal peptide directing secretion. N-linked (GlcNAc...) asparagine glycans are attached at residues Asn-57 and Asn-67.

The protein is Mating factor alpha of Lachancea kluyveri (Yeast).